Consider the following 95-residue polypeptide: MREKGKLVIWPANLDKSRSRKGGRIISRKSSLEAPLLRELTAAAEKLNLNPEVEADKKYPRTWWESSGRILVDNNEAKTMVARKIAKTIKEARGG.

Belongs to the SRP19 family. In terms of assembly, part of the signal recognition particle protein translocation system, which is composed of SRP and FtsY. Archaeal SRP consists of a 7S RNA molecule of 300 nucleotides and two protein subunits: SRP54 and SRP19.

The protein resides in the cytoplasm. Its function is as follows. Involved in targeting and insertion of nascent membrane proteins into the cytoplasmic membrane. Binds directly to 7S RNA and mediates binding of the 54 kDa subunit of the SRP. The chain is Signal recognition particle 19 kDa protein from Methanococcoides burtonii (strain DSM 6242 / NBRC 107633 / OCM 468 / ACE-M).